Here is a 94-residue protein sequence, read N- to C-terminus: uncharacterized protein (94 aa).

Positions 1 to 19 are cleaved as a signal peptide; the sequence is MKFSGLILGALALVSGAIA.

It belongs to the protease inhibitor I9 family.

This is an uncharacterized protein from Neurospora crassa (strain ATCC 24698 / 74-OR23-1A / CBS 708.71 / DSM 1257 / FGSC 987).